Here is a 255-residue protein sequence, read N- to C-terminus: Ribonuclease PH (255 aa).

Phosphate contacts are provided by residues Arg-86 and 124-126; that span reads GTR.

Belongs to the RNase PH family. In terms of assembly, homohexameric ring arranged as a trimer of dimers.

The catalysed reaction is tRNA(n+1) + phosphate = tRNA(n) + a ribonucleoside 5'-diphosphate. Phosphorolytic 3'-5' exoribonuclease that plays an important role in tRNA 3'-end maturation. Removes nucleotide residues following the 3'-CCA terminus of tRNAs; can also add nucleotides to the ends of RNA molecules by using nucleoside diphosphates as substrates, but this may not be physiologically important. Probably plays a role in initiation of 16S rRNA degradation (leading to ribosome degradation) during starvation. The polypeptide is Ribonuclease PH (Geobacillus sp. (strain WCH70)).